The primary structure comprises 945 residues: Kinesin-like protein KIN-UA (945 aa).

Positions M1 to D54 are disordered. Over residues A22 to P31 the composition is skewed to low complexity. One can recognise a Kinesin motor domain in the interval R57–I399. G142 to T149 is an ATP binding site. The D-BOX motif lies at R369–G377. Residues Y415–D644 adopt a coiled-coil conformation. ARM repeat units lie at residues R683–A722, D724–M764, G766–G806, and E808–K847.

Belongs to the TRAFAC class myosin-kinesin ATPase superfamily. Kinesin family. Ungrouped subfamily.

Its subcellular location is the cytoplasm. It localises to the cytoskeleton. In Oryza sativa subsp. japonica (Rice), this protein is Kinesin-like protein KIN-UA.